The following is a 456-amino-acid chain: N(6)-adenosine-methyltransferase non-catalytic subunit METTL14 (456 aa).

Residues 50 to 75 (TCRASYDTSAPNAKRKYLDEGETDED) form a disordered region. 2 interaction with METTL3 regions span residues 135-136 (RD) and 237-238 (SG). Positions 245–254 (RVCLRKWGYR) are positively charged region required for RNA-binding. 2 interaction with METTL3 regions span residues 255 to 258 (RCED) and 278 to 287 (KAVFQRTKEH). Residues 297-298 (KR) are positively charged region required for RNA-binding. An interaction with METTL3 region spans residues 308-312 (NVDID). The tract at residues 393-456 (ERLRPKSPPP…GAHRGGFPPR (64 aa)) is disordered. Residue serine 399 is modified to Phosphoserine. The segment covering 409 to 423 (GGGAPRGGGRGGTSA) has biased composition (gly residues). Over residues 425-440 (RGRERNRSNFRGERGG) the composition is skewed to basic and acidic residues. The segment covering 441–450 (FRGGRGGAHR) has biased composition (gly residues).

This sequence belongs to the MT-A70-like family. In terms of assembly, heterodimer; heterodimerizes with METTL3 to form an antiparallel heterodimer that constitutes an active methyltransferase. Component of the WMM complex, a N6-methyltransferase complex composed of a catalytic subcomplex, named MAC, and of an associated subcomplex, named MACOM. The MAC subcomplex is composed of METTL3 and METTL14. The MACOM subcomplex is composed of WTAP, ZC3H13, CBLL1/HAKAI, VIRMA, and, in some cases of RBM15 (RBM15 or RBM15B).

The protein resides in the nucleus. Functionally, the METTL3-METTL14 heterodimer forms a N6-methyltransferase complex that methylates adenosine residues at the N(6) position of some mRNAs and regulates the circadian clock, differentiation of embryonic stem cells and cortical neurogenesis. In the heterodimer formed with METTL3, METTL14 constitutes the RNA-binding scaffold that recognizes the substrate rather than the catalytic core. N6-methyladenosine (m6A), which takes place at the 5'-[AG]GAC-3' consensus sites of some mRNAs, plays a role in mRNA stability and processing. M6A acts as a key regulator of mRNA stability by promoting mRNA destabilization and degradation. In embryonic stem cells (ESCs), m6A methylation of mRNAs encoding key naive pluripotency-promoting transcripts results in transcript destabilization. M6A regulates spermatogonial differentiation and meiosis and is essential for male fertility and spermatogenesis. M6A also regulates cortical neurogenesis: m6A methylation of transcripts related to transcription factors, neural stem cells, the cell cycle and neuronal differentiation during brain development promotes their destabilization and decay, promoting differentiation of radial glial cells. This is N(6)-adenosine-methyltransferase non-catalytic subunit METTL14 from Homo sapiens (Human).